Reading from the N-terminus, the 168-residue chain is 3-isopropylmalate dehydratase small subunit (168 aa).

It belongs to the LeuD family. LeuD type 2 subfamily. In terms of assembly, heterodimer of LeuC and LeuD.

The enzyme catalyses (2R,3S)-3-isopropylmalate = (2S)-2-isopropylmalate. Its pathway is amino-acid biosynthesis; L-leucine biosynthesis; L-leucine from 3-methyl-2-oxobutanoate: step 2/4. Its function is as follows. Catalyzes the isomerization between 2-isopropylmalate and 3-isopropylmalate, via the formation of 2-isopropylmaleate. The polypeptide is 3-isopropylmalate dehydratase small subunit (Thermodesulfovibrio yellowstonii (strain ATCC 51303 / DSM 11347 / YP87)).